The sequence spans 647 residues: Threonine--tRNA ligase (647 aa).

The 61-residue stretch at 1-61 folds into the TGS domain; it reads MIKITFPDGA…EEDGSIEIVT (61 aa). Positions 240–538 are catalytic; the sequence is DHRKLGKELD…LIETYKGAFP (299 aa). 3 residues coordinate Zn(2+): Cys334, His385, and His515.

It belongs to the class-II aminoacyl-tRNA synthetase family. As to quaternary structure, homodimer. Zn(2+) serves as cofactor.

It localises to the cytoplasm. The catalysed reaction is tRNA(Thr) + L-threonine + ATP = L-threonyl-tRNA(Thr) + AMP + diphosphate + H(+). Functionally, catalyzes the attachment of threonine to tRNA(Thr) in a two-step reaction: L-threonine is first activated by ATP to form Thr-AMP and then transferred to the acceptor end of tRNA(Thr). Also edits incorrectly charged L-seryl-tRNA(Thr). This is Threonine--tRNA ligase from Streptococcus pyogenes serotype M6 (strain ATCC BAA-946 / MGAS10394).